The sequence spans 283 residues: MKVISSIQELRDQLRGQNRVAFVPTMGNLHEGHLSLMRLARQHGDPVVASIFVNRLQFGPNEDFDKYPRTLQDDIEKLQKEGVYVLFAPTERDMYPEPQEYRVEPPHDLGDTLEGEFRPGFFKGVCTVVMKLFCCVQPRVAVFGKKDYQQLMIVRRMAHQFALPVDIVPAETVRADDGLALSSRNVYLTNEERAEAPELYRTLHQVRQDVLETVLQGQASHEEVTTKAMDYLRGRGWQPDYVAVRRRSDLQKPTPENIAAGEPLVVLTAAKLGKTRLIDNLEI.

26–33 (MGNLHEGH) lines the ATP pocket. His-33 serves as the catalytic Proton donor. Residue Gln-57 participates in (R)-pantoate binding. Residue Gln-57 coordinates beta-alanine. 144–147 (GKKD) provides a ligand contact to ATP. Gln-150 contributes to the (R)-pantoate binding site. Residues Val-173 and 181–184 (LSSR) each bind ATP.

Belongs to the pantothenate synthetase family. In terms of assembly, homodimer.

The protein resides in the cytoplasm. It carries out the reaction (R)-pantoate + beta-alanine + ATP = (R)-pantothenate + AMP + diphosphate + H(+). It participates in cofactor biosynthesis; (R)-pantothenate biosynthesis; (R)-pantothenate from (R)-pantoate and beta-alanine: step 1/1. Functionally, catalyzes the condensation of pantoate with beta-alanine in an ATP-dependent reaction via a pantoyl-adenylate intermediate. The sequence is that of Pantothenate synthetase from Ralstonia pickettii (strain 12J).